The primary structure comprises 230 residues: Urease accessory protein UreF (230 aa).

The protein belongs to the UreF family. In terms of assembly, ureD, UreF and UreG form a complex that acts as a GTP-hydrolysis-dependent molecular chaperone, activating the urease apoprotein by helping to assemble the nickel containing metallocenter of UreC. The UreE protein probably delivers the nickel.

The protein localises to the cytoplasm. Functionally, required for maturation of urease via the functional incorporation of the urease nickel metallocenter. This is Urease accessory protein UreF from Cupriavidus necator (strain ATCC 17699 / DSM 428 / KCTC 22496 / NCIMB 10442 / H16 / Stanier 337) (Ralstonia eutropha).